We begin with the raw amino-acid sequence, 82 residues long: Sec-independent protein translocase protein TatA (82 aa).

Residues 1–21 traverse the membrane as a helical segment; it reads MGGISVWQLLIIAVIVVLLFG. The segment at 41 to 82 is disordered; sequence KAMSEDEPAKKDDKDADFEPKSLEEQQKKEAAPESKKDKEQA. Residues 42-82 are compositionally biased toward basic and acidic residues; it reads AMSEDEPAKKDDKDADFEPKSLEEQQKKEAAPESKKDKEQA.

The protein belongs to the TatA/E family. The Tat system comprises two distinct complexes: a TatABC complex, containing multiple copies of TatA, TatB and TatC subunits, and a separate TatA complex, containing only TatA subunits. Substrates initially bind to the TatABC complex, which probably triggers association of the separate TatA complex to form the active translocon.

It localises to the cell inner membrane. Its function is as follows. Part of the twin-arginine translocation (Tat) system that transports large folded proteins containing a characteristic twin-arginine motif in their signal peptide across membranes. TatA could form the protein-conducting channel of the Tat system. This is Sec-independent protein translocase protein TatA from Vibrio campbellii (strain ATCC BAA-1116).